We begin with the raw amino-acid sequence, 181 residues long: ATP synthase subunit b 2 (181 aa).

The span at 1–18 shows a compositional bias: low complexity; it reads MATTTHDAGHGAAEAAHG. A disordered region spans residues 1-20; the sequence is MATTTHDAGHGAAEAAHGSS. The chain crosses the membrane as a helical span at residues 34-54; the sequence is IFWLLVTLVVIYLILSRIALP.

Belongs to the ATPase B chain family. In terms of assembly, F-type ATPases have 2 components, F(1) - the catalytic core - and F(0) - the membrane proton channel. F(1) has five subunits: alpha(3), beta(3), gamma(1), delta(1), epsilon(1). F(0) has three main subunits: a(1), b(2) and c(10-14). The alpha and beta chains form an alternating ring which encloses part of the gamma chain. F(1) is attached to F(0) by a central stalk formed by the gamma and epsilon chains, while a peripheral stalk is formed by the delta and b chains.

The protein localises to the cell inner membrane. Its function is as follows. F(1)F(0) ATP synthase produces ATP from ADP in the presence of a proton or sodium gradient. F-type ATPases consist of two structural domains, F(1) containing the extramembraneous catalytic core and F(0) containing the membrane proton channel, linked together by a central stalk and a peripheral stalk. During catalysis, ATP synthesis in the catalytic domain of F(1) is coupled via a rotary mechanism of the central stalk subunits to proton translocation. In terms of biological role, component of the F(0) channel, it forms part of the peripheral stalk, linking F(1) to F(0). The b'-subunit is a diverged and duplicated form of b found in plants and photosynthetic bacteria. This Ruegeria sp. (strain TM1040) (Silicibacter sp.) protein is ATP synthase subunit b 2 (atpF2).